Here is a 325-residue protein sequence, read N- to C-terminus: UPF0285 protein MmarC5_0962 (325 aa).

Belongs to the UPF0285 family.

The chain is UPF0285 protein MmarC5_0962 from Methanococcus maripaludis (strain C5 / ATCC BAA-1333).